Here is a 412-residue protein sequence, read N- to C-terminus: Zinc finger protein 821 (412 aa).

The interval 26–83 (RQAMMKTDFPGDLGSQRQAIQQLRDQDSSSSDSEGDEEETTQDEVSSHTSEEDGGVVK) is disordered. The span at 58–67 (SEGDEEETTQ) shows a compositional bias: acidic residues. 2 C2H2-type zinc fingers span residues 116 to 140 (GLCQCPLCQLDCGSREQLIAHVYQH) and 150 to 172 (YMCPVCGRALSSPGSLGRHLLIH). The stretch at 257–366 (KWALRRQNEP…EKMDMMLRAQ (110 aa)) forms a coiled coil. Positions 278–319 (RTAKKSRRDNETPEEREVRRMRDREAKRLQRMQETDEQRARR) are disordered.

This sequence belongs to the krueppel C2H2-type zinc-finger protein family.

It is found in the nucleus. Functionally, may be involved in transcriptional regulation. This chain is Zinc finger protein 821 (ZNF821), found in Bos taurus (Bovine).